A 714-amino-acid polypeptide reads, in one-letter code: Developmentally-regulated protein kinase 1 (714 aa).

Disordered stretches follow at residues 88 to 122 (NNNI…NNFN) and 174 to 266 (CNMI…IINN). Low complexity-rich tracts occupy residues 174-200 (CNMI…NNNN), 209-227 (PSSN…TTSS), and 240-266 (NFNQ…IINN). The Protein kinase domain occupies 334-589 (FNFYGSLGSG…SCSIRNHKWF (256 aa)). ATP-binding positions include 340-348 (LGSGSFGTA) and K363. D457 serves as the catalytic Proton acceptor. A Phosphothreonine modification is found at T488.

It belongs to the protein kinase superfamily. AGC Ser/Thr protein kinase family.

The enzyme catalyses L-seryl-[protein] + ATP = O-phospho-L-seryl-[protein] + ADP + H(+). It catalyses the reaction L-threonyl-[protein] + ATP = O-phospho-L-threonyl-[protein] + ADP + H(+). The protein is Developmentally-regulated protein kinase 1 (pkaD) of Dictyostelium discoideum (Social amoeba).